A 468-amino-acid chain; its full sequence is MSPKTLYDKIWDAHLAHEAEDGTCLLYIDRHLVHEVTSPQAFEGLRMAGRKVRAPEKTIAVPDHNVPTTEGREDPAQMTEESRIQVQALDKNAREFGVHYYPVDDIRQGIVHIVGPEQGWTLPGMTVVCGDSHTATHGAFGALAHGIGTSEVEHVLATQTLIQKKSKNMKVEITGKLNPGVTAKDITLAVIGATGTAGGTGYVIEYCGEAIRDLSMEGRMTVCNMAIEGGARAGLIAPDQTTFDYVKGRPHAPKGAQWEAALAWWKTLYSDDGAHFDKIVTLKGEEIEPVVTWGTSPEDVLPITGVVPSPEDFTGGKVEAARRSIEYMGLTPGQKLTDIEIDTVFIGSCTNGRIEDLRAVAEVVKGKKIKSGLRAMVVPGSGLVRAQAEEEGIADILKDAGFEWRLAGCSMCLAMNPDQLAPGERCAATSNRNFEGRQGYKGRTHLVSPAMAAAAALTGKLTDVRELI.

Residues C349, C409, and C412 each contribute to the [4Fe-4S] cluster site.

Belongs to the aconitase/IPM isomerase family. LeuC type 1 subfamily. In terms of assembly, heterodimer of LeuC and LeuD. The cofactor is [4Fe-4S] cluster.

It carries out the reaction (2R,3S)-3-isopropylmalate = (2S)-2-isopropylmalate. Its pathway is amino-acid biosynthesis; L-leucine biosynthesis; L-leucine from 3-methyl-2-oxobutanoate: step 2/4. In terms of biological role, catalyzes the isomerization between 2-isopropylmalate and 3-isopropylmalate, via the formation of 2-isopropylmaleate. This Ruegeria pomeroyi (strain ATCC 700808 / DSM 15171 / DSS-3) (Silicibacter pomeroyi) protein is 3-isopropylmalate dehydratase large subunit.